A 576-amino-acid polypeptide reads, in one-letter code: Arginine--tRNA ligase (576 aa).

Positions 122-132 (PNVAKQMHVGH) match the 'HIGH' region motif.

It belongs to the class-I aminoacyl-tRNA synthetase family. As to quaternary structure, monomer.

The protein resides in the cytoplasm. It carries out the reaction tRNA(Arg) + L-arginine + ATP = L-arginyl-tRNA(Arg) + AMP + diphosphate. This is Arginine--tRNA ligase from Yersinia pestis bv. Antiqua (strain Antiqua).